Reading from the N-terminus, the 61-residue chain is Large ribosomal subunit protein uL30 (61 aa).

This sequence belongs to the universal ribosomal protein uL30 family. Part of the 50S ribosomal subunit.

This is Large ribosomal subunit protein uL30 from Frankia casuarinae (strain DSM 45818 / CECT 9043 / HFP020203 / CcI3).